The sequence spans 323 residues: Peroxisome biogenesis protein 20 (323 aa).

A Glycyl cysteine thioester (Cys-Gly) (interchain with G-Cter in ubiquitin) cross-link involves residue C8. K19 participates in a covalent cross-link: Glycyl lysine isopeptide (Lys-Gly) (interchain with G-Cter in ubiquitin). 3 consecutive short sequence motifs (wxxxF/Y motif) follow at residues 89-93 (WSSEF), 102-105 (WVED), and 141-145 (WTQEF).

Belongs to the peroxisomal targeting signal receptor family. In terms of assembly, interacts (via WxxxF/Y and LVxEF motifs) with PEX14; promoting translocation through the PEX13-PEX14 docking complex. Interacts with PEX7. In terms of processing, monoubiquitinated at Cys-8 by PEX2 during PEX20 passage through the PEX2-PEX10-PEX12 retrotranslocation channel: monoubiquitination acts as a signal for PEX20 extraction and is required for proper export from peroxisomes and recycling. When PEX5 recycling is compromised, polyubiquitinated at Lys-19 by PEX10 during its passage through the retrotranslocation channel, leading to its degradation.

Its subcellular location is the cytoplasm. The protein localises to the cytosol. It localises to the peroxisome matrix. Its function is as follows. Coreceptor required for the peroxisomal import of proteins containing a C-terminal PTS2-type peroxisomal targeting signal, such as 3-oxoacyl-CoA thiolase. Acts via its interaction with PEX7, promoting association between PEX7 bound to cargo proteins and the PEX13-PEX14 docking complex. PEX20 along with PEX7 and PTS2-containing cargo proteins are tranlocated into peroxisomes by passing through the PEX13-PEX14 docking complex. PEX20 coreceptor is then retrotranslocated into the cytosol, leading to release of bound cargo in the peroxisome matrix, and reset for a subsequent peroxisome import cycle. Also mediates peroxisomal import of proteins that do not contain PTS1- or PTS2-type peroxisomal targeting signals, such as acyl-CoA oxidases (Aox) izozymes. Import of acyl-CoA oxidases (Aox) izozymes is independent of PEX7. Required for PEX7 ubiquitination. This is Peroxisome biogenesis protein 20 from Komagataella pastoris (Yeast).